An 81-amino-acid chain; its full sequence is Protein Vpu (81 aa).

Over 1–7 (MQSLEIL) the chain is Extracellular. A helical transmembrane segment spans residues 8-28 (AIVALVVAAILAIVVWTIVGI). At 29-81 (EIRKTLRQKKIDRLIDRIRERAEDSGNESDGDEEELSALVEMGHHAPWDVDDL) the chain is on the cytoplasmic side. The interval 50–81 (AEDSGNESDGDEEELSALVEMGHHAPWDVDDL) is disordered. Phosphoserine; by host CK2 occurs at positions 53 and 57. Residues 53 to 64 (SGNESDGDEEEL) show a composition bias toward acidic residues. A compositionally biased stretch (basic and acidic residues) spans 70–81 (MGHHAPWDVDDL).

The protein belongs to the HIV-1 VPU protein family. In terms of assembly, homopentamer. Interacts with host CD4 and BRTC; these interactions induce proteasomal degradation of CD4. Interacts with host BST2; this interaction leads to the degradation of host BST2. Interacts with host FBXW11. Interacts with host AP1M1; this interaction plays a role in the mistrafficking and subsequent degradation of host BST2. Interacts with host RANBP2; this interaction allows Vpu to down-regulate host BLM sumoylation. In terms of processing, phosphorylated by host CK2. This phosphorylation is necessary for interaction with human BTRC and degradation of CD4.

The protein resides in the host membrane. With respect to regulation, ion channel activity is inhibited by hexamethylene amiloride in vitro. In terms of biological role, enhances virion budding by targeting host CD4 and Tetherin/BST2 to proteasome degradation. Degradation of CD4 prevents any unwanted premature interactions between viral Env and its host receptor CD4 in the endoplasmic reticulum. Degradation of antiretroviral protein Tetherin/BST2 is important for virion budding, as BST2 tethers new viral particles to the host cell membrane. Mechanistically, Vpu bridges either CD4 or BST2 to BTRC, a substrate recognition subunit of the Skp1/Cullin/F-box protein E3 ubiquitin ligase, induces their ubiquitination and subsequent proteasomal degradation. The alteration of the E3 ligase specificity by Vpu seems to promote the degradation of host IKBKB, leading to NF-kappa-B down-regulation and subsequent apoptosis. Acts as a viroporin that forms an oligomeric ion channel in membranes. Modulates the host DNA repair mechanisms to promote degradation of nuclear viral cDNA in cells that are already productively infected in order to suppress immune sensing and proviral hyper-integration (superinfection). Manipulates PML-NBs and modulates SUMOylation of host BLM protein thereby enhancing its DNA-end processing activity toward viral unintegrated linear DNA. Also inhibits RAD52-mediated homologous repair of viral cDNA, preventing the generation of dead-end circular forms of single copies of the long terminal repeat and permitting sustained nucleolytic attack. This chain is Protein Vpu, found in Homo sapiens (Human).